The sequence spans 505 residues: ATP synthase subunit alpha (505 aa).

170–177 lines the ATP pocket; the sequence is GDRQTGKT.

The protein belongs to the ATPase alpha/beta chains family. As to quaternary structure, F-type ATPases have 2 components, CF(1) - the catalytic core - and CF(0) - the membrane proton channel. CF(1) has five subunits: alpha(3), beta(3), gamma(1), delta(1), epsilon(1). CF(0) has four main subunits: a(1), b(1), b'(1) and c(9-12).

The protein resides in the cellular thylakoid membrane. The enzyme catalyses ATP + H2O + 4 H(+)(in) = ADP + phosphate + 5 H(+)(out). In terms of biological role, produces ATP from ADP in the presence of a proton gradient across the membrane. The alpha chain is a regulatory subunit. In Synechococcus sp. (strain RCC307), this protein is ATP synthase subunit alpha.